A 198-amino-acid polypeptide reads, in one-letter code: Protein XA-1 (198 aa).

The first 18 residues, 1–18, serve as a signal peptide directing secretion; that stretch reads MFFYVLLLALMAQGWSLP. Residues 17–198 form a disordered region; sequence LPQGKTGEDS…KHGQEQGKKH (182 aa). Pro residues predominate over residues 29-44; sequence FRPPSPPMGPSLPPPV. Positions 46 to 59 are enriched in basic and acidic residues; that stretch reads HDLHRPSGHPEEFR. A compositionally biased stretch (basic residues) spans 76-86; sequence GRPKRDLHHGK. Over residues 95-104 the composition is skewed to basic and acidic residues; the sequence is HTGEVLHHTD. A compositionally biased stretch (basic residues) spans 134-145; sequence HGRHRRDLHHGK. Basic and acidic residues predominate over residues 181 to 198; it reads NSSEEKRPKHGQEQGKKH.

Expressed in the periphery of the cement gland as well as in the region of the hatching gland.

Its subcellular location is the secreted. This chain is Protein XA-1, found in Xenopus laevis (African clawed frog).